The primary structure comprises 33 residues: Nigrocin-1 (33 aa).

The cysteines at positions 27 and 33 are disulfide-linked.

Belongs to the frog skin active peptide (FSAP) family. Brevinin subfamily. Expressed by the skin dorsal glands.

Its subcellular location is the secreted. Its function is as follows. Shows antibacterial activity against both Gram-positive and Gram-negative bacteria and against the fungus C.albicans. Has no hemolytic activity. The chain is Nigrocin-1 from Pelophylax nigromaculatus (Black-spotted frog).